We begin with the raw amino-acid sequence, 222 residues long: Phosphoribosylformylglycinamidine synthase subunit PurQ (222 aa).

The Glutamine amidotransferase type-1 domain occupies 2 to 222 (RTAVIQFPGS…FESLKGALVQ (221 aa)). Cys-87 serves as the catalytic Nucleophile. Catalysis depends on residues His-195 and Glu-197.

In terms of assembly, part of the FGAM synthase complex composed of 1 PurL, 1 PurQ and 2 PurS subunits.

Its subcellular location is the cytoplasm. It catalyses the reaction N(2)-formyl-N(1)-(5-phospho-beta-D-ribosyl)glycinamide + L-glutamine + ATP + H2O = 2-formamido-N(1)-(5-O-phospho-beta-D-ribosyl)acetamidine + L-glutamate + ADP + phosphate + H(+). The catalysed reaction is L-glutamine + H2O = L-glutamate + NH4(+). Its pathway is purine metabolism; IMP biosynthesis via de novo pathway; 5-amino-1-(5-phospho-D-ribosyl)imidazole from N(2)-formyl-N(1)-(5-phospho-D-ribosyl)glycinamide: step 1/2. Part of the phosphoribosylformylglycinamidine synthase complex involved in the purines biosynthetic pathway. Catalyzes the ATP-dependent conversion of formylglycinamide ribonucleotide (FGAR) and glutamine to yield formylglycinamidine ribonucleotide (FGAM) and glutamate. The FGAM synthase complex is composed of three subunits. PurQ produces an ammonia molecule by converting glutamine to glutamate. PurL transfers the ammonia molecule to FGAR to form FGAM in an ATP-dependent manner. PurS interacts with PurQ and PurL and is thought to assist in the transfer of the ammonia molecule from PurQ to PurL. The sequence is that of Phosphoribosylformylglycinamidine synthase subunit PurQ from Deinococcus geothermalis (strain DSM 11300 / CIP 105573 / AG-3a).